A 411-amino-acid chain; its full sequence is Translation initiation factor 2 subunit gamma (411 aa).

The tr-type G domain occupies 9-203 (QAEVNIGMVG…AIQDFIPTPK (195 aa)). The interval 18 to 25 (GHVDHGKT) is G1. Mg(2+)-binding residues include Asp-21, Thr-25, Gly-46, and Ser-48. GTP is bound at residue 21–26 (DHGKTS). A G2 region spans residues 46–50 (GISIR). Residues Cys-61, Cys-64, Cys-73, and Cys-76 each contribute to the Zn(2+) site. The segment at 90-93 (DSPG) is G3. GTP contacts are provided by residues 146 to 149 (NKID) and 181 to 183 (SAH). Residues 146 to 149 (NKID) are G4. The tract at residues 181–183 (SAH) is G5.

The protein belongs to the TRAFAC class translation factor GTPase superfamily. Classic translation factor GTPase family. EIF2G subfamily. As to quaternary structure, heterotrimer composed of an alpha, a beta and a gamma chain. Mg(2+) serves as cofactor.

It carries out the reaction GTP + H2O = GDP + phosphate + H(+). EIF-2 functions in the early steps of protein synthesis by forming a ternary complex with GTP and initiator tRNA. This is Translation initiation factor 2 subunit gamma from Methanocaldococcus jannaschii (strain ATCC 43067 / DSM 2661 / JAL-1 / JCM 10045 / NBRC 100440) (Methanococcus jannaschii).